We begin with the raw amino-acid sequence, 439 residues long: DNA primase DnaG (439 aa).

The region spanning 169 to 243 (DSIIVVEGRA…DIDYVARAPY (75 aa)) is the Toprim domain. Mg(2+) contacts are provided by Glu175, Asp217, and Asp219.

Belongs to the archaeal DnaG primase family. As to quaternary structure, forms a ternary complex with MCM helicase and DNA. The cofactor is Mg(2+).

The catalysed reaction is ssDNA + n NTP = ssDNA/pppN(pN)n-1 hybrid + (n-1) diphosphate.. In terms of biological role, RNA polymerase that catalyzes the synthesis of short RNA molecules used as primers for DNA polymerase during DNA replication. The polypeptide is DNA primase DnaG (Methanococcus maripaludis (strain C7 / ATCC BAA-1331)).